A 475-amino-acid chain; its full sequence is Sulfate adenylyltransferase subunit 1 (475 aa).

Positions 25 to 239 (KSLLRFLTCG…EVLETVEIQR (215 aa)) constitute a tr-type G domain. The interval 34–41 (GSVDDGKS) is G1. 34–41 (GSVDDGKS) lines the GTP pocket. Residues 92-96 (GITID) form a G2 region. The interval 113–116 (DTPG) is G3. Residues 113 to 117 (DTPGH) and 168 to 171 (NKMD) contribute to the GTP site. Positions 168 to 171 (NKMD) are G4. The segment at 206–208 (SAL) is G5.

This sequence belongs to the TRAFAC class translation factor GTPase superfamily. Classic translation factor GTPase family. CysN/NodQ subfamily. In terms of assembly, heterodimer composed of CysD, the smaller subunit, and CysN.

It catalyses the reaction sulfate + ATP + H(+) = adenosine 5'-phosphosulfate + diphosphate. It participates in sulfur metabolism; hydrogen sulfide biosynthesis; sulfite from sulfate: step 1/3. In terms of biological role, with CysD forms the ATP sulfurylase (ATPS) that catalyzes the adenylation of sulfate producing adenosine 5'-phosphosulfate (APS) and diphosphate, the first enzymatic step in sulfur assimilation pathway. APS synthesis involves the formation of a high-energy phosphoric-sulfuric acid anhydride bond driven by GTP hydrolysis by CysN coupled to ATP hydrolysis by CysD. The protein is Sulfate adenylyltransferase subunit 1 of Shigella flexneri.